A 1006-amino-acid chain; its full sequence is DNA polymerase (1006 aa).

Belongs to the DNA polymerase type-B family. Interacts with OPG148. Component of the Uracil-DNA glycosylase(UDG)-OPG148-polymerase complex; OPG148 and OPG116/UDG form a heterodimeric processivity factor that associates with OPG071 to form the processive polymerase holoenzyme.

It catalyses the reaction DNA(n) + a 2'-deoxyribonucleoside 5'-triphosphate = DNA(n+1) + diphosphate. Functionally, catalyzes DNA synthesis. Acquires processivity by associating with a heterodimeric processivity factor comprised of the viral OPG148 and OPG116 proteins, thereby forming the DNA polymerase holoenzyme. Displays 3'- to 5' exonuclease activity. Might participate in viral DNA recombination. Does not perform OPG116/D4synthesis across an abasic site. The protein is DNA polymerase (OPG071) of Homo sapiens (Human).